Reading from the N-terminus, the 166-residue chain is Putative universal stress protein SA1532 (166 aa).

The protein belongs to the universal stress protein A family.

It is found in the cytoplasm. The protein is Putative universal stress protein SA1532 of Staphylococcus aureus (strain N315).